The primary structure comprises 371 residues: Partitioning defective 6 homolog beta (371 aa).

Residues S10 and S11 each carry the phosphoserine modification. In terms of domain architecture, PB1 spans 16–96; the sequence is TMEVKSKFGA…PLLRIFIQKK (81 aa). The interval 126 to 253 is interaction with PARD3 and CDC42; the sequence is RKKPHIVISM…ITVRPANQRN (128 aa). One can recognise a Pseudo-CRIB domain in the interval 133-150; sequence ISMPQDFRPVSSIIDVDI. The PDZ domain maps to 157 to 250; the sequence is RVRLYKYGTE…NLIITVRPAN (94 aa). Disordered stretches follow at residues 253–273 and 326–371; these read NNVVRNSRTSGSSSQSTDNSL and FESG…IITL. The span at 326 to 340 shows a compositional bias: polar residues; sequence FESGQNGFSPPQDTS. Positions 352–363 are enriched in basic and acidic residues; the sequence is LESRAPDQKLLE.

It belongs to the PAR6 family. Interacts with PARD3. Interacts with GTP-bound forms of CDC42, RHOQ/TC10 and RAC1. Interacts with the N-terminal part of PRKCI and PRKCZ. Part of a complex with PARD3, CDC42 or RAC1 and PRKCI or PRKCZ. Part of a complex with LLGL1 and PRKCI. Interacts with ALS2CR19. Interacts with ECT2. Interacts with PALS1. Expressed in pancreas and in both adult and fetal kidney. Weakly expressed in placenta and lung. Not expressed in other tissues.

It is found in the cytoplasm. It localises to the cell membrane. The protein localises to the cell junction. Its subcellular location is the tight junction. In terms of biological role, adapter protein involved in asymmetrical cell division and cell polarization processes. Probably involved in formation of epithelial tight junctions. Association with PARD3 may prevent the interaction of PARD3 with F11R/JAM1, thereby preventing tight junction assembly. The PARD6-PARD3 complex links GTP-bound Rho small GTPases to atypical protein kinase C proteins. The polypeptide is Partitioning defective 6 homolog beta (Pard6b) (Mus musculus (Mouse)).